Reading from the N-terminus, the 478-residue chain is Ribulose bisphosphate carboxylase large chain (478 aa).

Residues methionine 1–serine 2 constitute a propeptide that is removed on maturation. Proline 3 bears the N-acetylproline mark. Residue lysine 14 is modified to N6,N6,N6-trimethyllysine. Asparagine 123 and threonine 173 together coordinate substrate. Catalysis depends on lysine 175, which acts as the Proton acceptor. Lysine 177 contributes to the substrate binding site. Residues lysine 201, aspartate 203, and glutamate 204 each coordinate Mg(2+). Position 201 is an N6-carboxylysine (lysine 201). The Proton acceptor role is filled by histidine 294. The substrate site is built by arginine 295, histidine 327, and serine 379.

Belongs to the RuBisCO large chain family. Type I subfamily. As to quaternary structure, heterohexadecamer of 8 large chains and 8 small chains; disulfide-linked. The disulfide link is formed within the large subunit homodimers. It depends on Mg(2+) as a cofactor. The disulfide bond which can form in the large chain dimeric partners within the hexadecamer appears to be associated with oxidative stress and protein turnover.

The protein resides in the plastid. Its subcellular location is the chloroplast. It carries out the reaction 2 (2R)-3-phosphoglycerate + 2 H(+) = D-ribulose 1,5-bisphosphate + CO2 + H2O. It catalyses the reaction D-ribulose 1,5-bisphosphate + O2 = 2-phosphoglycolate + (2R)-3-phosphoglycerate + 2 H(+). Its function is as follows. RuBisCO catalyzes two reactions: the carboxylation of D-ribulose 1,5-bisphosphate, the primary event in carbon dioxide fixation, as well as the oxidative fragmentation of the pentose substrate in the photorespiration process. Both reactions occur simultaneously and in competition at the same active site. This is Ribulose bisphosphate carboxylase large chain from Drimys granadensis.